The following is a 472-amino-acid chain: Cell division protein FtsP (472 aa).

The tat-type signal signal peptide spans 1–32 (MSLSRRRFIQASGLALCAGGLPLQARASGAQA).

It belongs to the FtsP family. Predicted to be exported by the Tat system. The position of the signal peptide cleavage has not been experimentally proven.

It localises to the periplasm. In terms of biological role, cell division protein that is required for growth during stress conditions. May be involved in protecting or stabilizing the divisomal assembly under conditions of stress. This Edwardsiella tarda (strain FL6-60) protein is Cell division protein FtsP.